The chain runs to 237 residues: Ly6/PLAUR domain-containing protein 8 (237 aa).

The signal sequence occupies residues 1–19; that stretch reads MKGILVAGITAVLVAAVES. 8 N-linked (GlcNAc...) asparagine glycosylation sites follow: Asn-45, Asn-73, Asn-107, Asn-118, Asn-132, Asn-172, Asn-175, and Asn-185. The UPAR/Ly6 domain occupies 125–176; that stretch reads CPACYESNGTSCHGKPWKCYEEEQCVFLVAELKNDIESKSLVLKGCSNVSNA. A lipid anchor (GPI-anchor amidated asparagine) is attached at Asn-215. Residues 216 to 237 constitute a propeptide, removed in mature form; it reads VGSKASLYLLALASLLLRGLLP.

Belongs to the CNF-like-inhibitor family. In terms of processing, highly N-glycosylated. Not O-glycosylated. Post-translationally, GPI-anchored. The GPI-anchor is cleaved, leading to secretion into the colonic lumen. As to expression, expressed in the large intestine. Preferentially expressed on the epithelial layer exposed to the lumen (at protein level).

The protein localises to the cell membrane. The protein resides in the secreted. Secreted protein specifically required to prevent invasion of Gram-negative bacteria in the inner mucus layer of the colon epithelium, a portion of the large intestine which is free of commensal microbiota. Prevents invasion of flagellated microbiota by binding to the flagellum of bacteria, such as P.mirabilis, thereby inhibiting bacterial motility in the intestinal lumen. Segregation of intestinal bacteria and epithelial cells in the colon is required to preserve intestinal homeostasis. This Homo sapiens (Human) protein is Ly6/PLAUR domain-containing protein 8.